Reading from the N-terminus, the 340-residue chain is DNA-directed RNA polymerase subunit alpha (340 aa).

Residues 1–238 are alpha N-terminal domain (alpha-NTD); sequence MADTFVAKNW…EQLTVFVNFD (238 aa). The alpha C-terminal domain (alpha-CTD) stretch occupies residues 253-340; the sequence is AKLNENLFRS…QAPAPAQPKA (88 aa).

This sequence belongs to the RNA polymerase alpha chain family. Homodimer. The RNAP catalytic core consists of 2 alpha, 1 beta, 1 beta' and 1 omega subunit. When a sigma factor is associated with the core the holoenzyme is formed, which can initiate transcription.

The enzyme catalyses RNA(n) + a ribonucleoside 5'-triphosphate = RNA(n+1) + diphosphate. Functionally, DNA-dependent RNA polymerase catalyzes the transcription of DNA into RNA using the four ribonucleoside triphosphates as substrates. The protein is DNA-directed RNA polymerase subunit alpha of Myxococcus xanthus (strain DK1622).